A 130-amino-acid chain; its full sequence is Phosphoribosyl-AMP cyclohydrolase (130 aa).

Asp80 is a binding site for Mg(2+). Cys81 is a binding site for Zn(2+). Mg(2+) contacts are provided by Asp82 and Asp84. The Zn(2+) site is built by Cys98 and Cys105.

This sequence belongs to the PRA-CH family. In terms of assembly, homodimer. Mg(2+) serves as cofactor. Zn(2+) is required as a cofactor.

It is found in the cytoplasm. It carries out the reaction 1-(5-phospho-beta-D-ribosyl)-5'-AMP + H2O = 1-(5-phospho-beta-D-ribosyl)-5-[(5-phospho-beta-D-ribosylamino)methylideneamino]imidazole-4-carboxamide. Its pathway is amino-acid biosynthesis; L-histidine biosynthesis; L-histidine from 5-phospho-alpha-D-ribose 1-diphosphate: step 3/9. Functionally, catalyzes the hydrolysis of the adenine ring of phosphoribosyl-AMP. This Oleidesulfovibrio alaskensis (strain ATCC BAA-1058 / DSM 17464 / G20) (Desulfovibrio alaskensis) protein is Phosphoribosyl-AMP cyclohydrolase.